The chain runs to 608 residues: Bifunctional dihydrofolate reductase-thymidylate synthase (608 aa).

Residues 10 to 228 (DIYAICACCK…TTLDFIIYKK (219 aa)) form the DHFR domain. Residue 14–15 (IC) participates in substrate binding. Residue Ala16 participates in NADP(+) binding. Val31 is a substrate binding site. An NADP(+)-binding site is contributed by 39–45 (GLGNKGV). The substrate site is built by Asp54 and Asn108. Residues 106–108 (RTN), 128–130 (SRT), and Asn144 each bind NADP(+). Substrate-binding residues include Ile164, Tyr170, and Thr185. 165–172 (GGSVVYQE) serves as a coordination point for NADP(+). The thymidylate synthase stretch occupies residues 322-608 (YHPEYQYLNI…HEKISMDMAA (287 aa)). Arg345 provides a ligand contact to dUMP. Cys490 is an active-site residue. DUMP-binding positions include His491, 509-513 (QRSCD), Asn521, and 551-553 (HVY).

In the N-terminal section; belongs to the dihydrofolate reductase family. This sequence in the C-terminal section; belongs to the thymidylate synthase family. In terms of assembly, homodimer.

The catalysed reaction is (6S)-5,6,7,8-tetrahydrofolate + NADP(+) = 7,8-dihydrofolate + NADPH + H(+). It carries out the reaction dUMP + (6R)-5,10-methylene-5,6,7,8-tetrahydrofolate = 7,8-dihydrofolate + dTMP. It participates in cofactor biosynthesis; tetrahydrofolate biosynthesis; 5,6,7,8-tetrahydrofolate from 7,8-dihydrofolate: step 1/1. Bifunctional enzyme. Involved in de novo dTMP biosynthesis. Key enzyme in folate metabolism. Catalyzes an essential reaction for de novo glycine and purine synthesis, DNA precursor synthesis, and for the conversion of dUMP to dTMP. The polypeptide is Bifunctional dihydrofolate reductase-thymidylate synthase (Plasmodium falciparum (isolate K1 / Thailand)).